The primary structure comprises 348 residues: Protein RecA (348 aa).

66–73 (GPESSGKT) contacts ATP.

This sequence belongs to the RecA family.

It is found in the cytoplasm. Can catalyze the hydrolysis of ATP in the presence of single-stranded DNA, the ATP-dependent uptake of single-stranded DNA by duplex DNA, and the ATP-dependent hybridization of homologous single-stranded DNAs. It interacts with LexA causing its activation and leading to its autocatalytic cleavage. In Legionella pneumophila (strain Lens), this protein is Protein RecA.